The primary structure comprises 116 residues: Large ribosomal subunit protein bL20 (116 aa).

This sequence belongs to the bacterial ribosomal protein bL20 family.

Binds directly to 23S ribosomal RNA and is necessary for the in vitro assembly process of the 50S ribosomal subunit. It is not involved in the protein synthesizing functions of that subunit. The polypeptide is Large ribosomal subunit protein bL20 (Mycoplasmopsis agalactiae (strain NCTC 10123 / CIP 59.7 / PG2) (Mycoplasma agalactiae)).